A 320-amino-acid chain; its full sequence is Ferrochelatase (320 aa).

The Fe cation site is built by His-194 and Glu-275.

The protein belongs to the ferrochelatase family. Monomer.

It localises to the cytoplasm. It catalyses the reaction heme b + 2 H(+) = protoporphyrin IX + Fe(2+). The protein operates within porphyrin-containing compound metabolism; protoheme biosynthesis; protoheme from protoporphyrin-IX: step 1/1. In terms of biological role, catalyzes the ferrous insertion into protoporphyrin IX. This Salmonella schwarzengrund (strain CVM19633) protein is Ferrochelatase.